The following is a 408-amino-acid chain: CinA-like protein (408 aa).

It belongs to the CinA family.

The sequence is that of CinA-like protein from Anaeromyxobacter dehalogenans (strain 2CP-C).